The primary structure comprises 187 residues: ATP synthase subunit delta (187 aa).

This sequence belongs to the ATPase delta chain family. F-type ATPases have 2 components, F(1) - the catalytic core - and F(0) - the membrane proton channel. F(1) has five subunits: alpha(3), beta(3), gamma(1), delta(1), epsilon(1). F(0) has three main subunits: a(1), b(2) and c(10-14). The alpha and beta chains form an alternating ring which encloses part of the gamma chain. F(1) is attached to F(0) by a central stalk formed by the gamma and epsilon chains, while a peripheral stalk is formed by the delta and b chains.

Its subcellular location is the cell membrane. Functionally, f(1)F(0) ATP synthase produces ATP from ADP in the presence of a proton or sodium gradient. F-type ATPases consist of two structural domains, F(1) containing the extramembraneous catalytic core and F(0) containing the membrane proton channel, linked together by a central stalk and a peripheral stalk. During catalysis, ATP synthesis in the catalytic domain of F(1) is coupled via a rotary mechanism of the central stalk subunits to proton translocation. Its function is as follows. This protein is part of the stalk that links CF(0) to CF(1). It either transmits conformational changes from CF(0) to CF(1) or is implicated in proton conduction. In Mesomycoplasma hyopneumoniae (strain 7448) (Mycoplasma hyopneumoniae), this protein is ATP synthase subunit delta.